A 278-amino-acid chain; its full sequence is Tumor necrosis factor ligand superfamily member 6 (278 aa).

The Cytoplasmic segment spans residues 1 to 77; it reads MQQPVNYPCP…SPLKKKDNIE (77 aa). Residues 26-68 are disordered; that stretch reads PGSVFSCPSSGPRGPGQRRPPPPPPPPSPLPPPSQPPPLPPLS. The segment covering 33–42 has biased composition (low complexity); sequence PSSGPRGPGQ. Positions 43–68 are enriched in pro residues; that stretch reads RRPPPPPPPPSPLPPPSQPPPLPPLS. The chain crosses the membrane as a helical; Signal-anchor for type II membrane protein span at residues 78–99; it reads LWLPVIFFMVLVALVGMGLGMY. Over 100–278 the chain is Extracellular; the sequence is QLFHLQKELA…SKTFFGLYKL (179 aa). Asparagine 116 is a glycosylation site (N-linked (GlcNAc...) asparagine). Residues 125 to 135 are compositionally biased toward polar residues; the sequence is EKQIANPSTPS. The interval 125–147 is disordered; that stretch reads EKQIANPSTPSETKKPRSVAHLT. Residues 142 to 278 form the THD domain; that stretch reads SVAHLTGNPR…SKTFFGLYKL (137 aa). Cysteine 199 and cysteine 230 are joined by a disulfide. N-linked (GlcNAc...) asparagine glycosylation is found at asparagine 247 and asparagine 257.

The protein belongs to the tumor necrosis factor family. In terms of assembly, homotrimer. Interacts with ARHGAP9, BAIAP2L1, BTK, CACNB3, CACNB4, CRK, DLG2, DNMBP, DOCK4, EPS8L3, FGR, FYB1, FYN, HCK, ITK, ITSN2, KALRN, LYN, MACC1, MIA, MPP4, MYO15A, NCF1, NCK1, NCK2, NCKIPSD, OSTF1, PIK3R1, PSTPIP1, RIMBP3C, SAMSN1, SH3GL3, SH3PXD2B, SH3PXD2A, SH3RF2, SKAP2, SNX33, SNX9, SORBS3, SPTA1, SRC, SRGAP1, SRGAP2, SRGAP3, TEC, TJP3 and YES1. The soluble form derives from the membrane form by proteolytic processing. The membrane-bound form undergoes two successive intramembrane proteolytic cleavages. The first one is processed by ADAM10 producing an N-terminal fragment, which lacks the receptor-binding extracellular domain. This ADAM10-processed FasL (FasL APL) remnant form is still membrane anchored and further processed by SPPL2A that liberates the FasL intracellular domain (FasL ICD). FasL shedding by ADAM10 is a prerequisite for subsequent intramembrane cleavage by SPPL2A in T-cells. Post-translationally, phosphorylated by FGR on tyrosine residues; this is required for ubiquitination and subsequent internalization. In terms of processing, N-glycosylated. Monoubiquitinated. As to expression, expressed in activated splenocytes and thymocytes. Moderate or weak expression found in small intestines, kidney and lung.

It localises to the cell membrane. The protein localises to the cytoplasmic vesicle lumen. It is found in the lysosome lumen. Its subcellular location is the secreted. The protein resides in the nucleus. Its function is as follows. Cytokine that binds to TNFRSF6/FAS, a receptor that transduces the apoptotic signal into cells. Involved in cytotoxic T-cell-mediated apoptosis, natural killer cell-mediated apoptosis and in T-cell development. Initiates fratricidal/suicidal activation-induced cell death (AICD) in antigen-activated T-cells contributing to the termination of immune responses. TNFRSF6/FAS-mediated apoptosis also has a role in the induction of peripheral tolerance. Binds to TNFRSF6B/DcR3, a decoy receptor that blocks apoptosis. Functionally, induces FAS-mediated activation of NF-kappa-B, initiating non-apoptotic signaling pathways. Can induce apoptosis but does not appear to be essential for this process. In terms of biological role, cytoplasmic form induces gene transcription inhibition. In Rattus norvegicus (Rat), this protein is Tumor necrosis factor ligand superfamily member 6 (Faslg).